The following is a 409-amino-acid chain: NDP-glycosyltransferase ltbB (409 aa).

An N-linked (GlcNAc...) asparagine glycan is attached at Asn-36. Residues 319–339 (IWAFAYVWAWLQTLYTAPWIA) form a helical membrane-spanning segment.

This sequence belongs to the GT2 glycosyltransferase family.

The protein localises to the membrane. It functions in the pathway secondary metabolite biosynthesis. Its function is as follows. NDP-glycosyltransferase; part of the gene cluster that mediates the biosynthesis of luteodienoside A, a glycosylated polyketide consisting of an unusual 1-O-beta-D-glucopyranosyl-myo-inositol (glucinol) ester of 3-hydroxy-2,2,4-trimethylocta-4,6-dienoic acid. LtbB likely serves as a glucinol synthase by transferring D-glucose to myo-inositol using NDP-glucose as a substrate. The ltbA carnitine O-acyltransferase (cAT) domain uses glucinol produced by the glycosyltransferase ltbB as an offloading substrate to release luteodienoside A from the HR-PKS. Since ltbA and ltbB are sufficient for the biosynthesis of luteodienoside A, the functions of the methyltransferase ltbC and the FAD-binding monooxygenase ltbD within the pathway remain obscur. This Aspergillus luteorubrus protein is NDP-glycosyltransferase ltbB.